Consider the following 880-residue polypeptide: 3-isopropylmalate dehydratase large subunit gloJ (880 aa).

[4Fe-4S] cluster contacts are provided by cysteine 457, cysteine 520, and cysteine 523.

Belongs to the aconitase/IPM isomerase family. LeuC type 2 subfamily. Requires [4Fe-4S] cluster as cofactor.

The catalysed reaction is (2R,3S)-3-isopropylmalate = (2S)-2-isopropylmalate. The protein operates within mycotoxin biosynthesis. 3-isopropylmalate dehydratase large subunit; part of the gene cluster that mediates the biosynthesis of pneumocandins, lipohexapeptides of the echinocandin family that prevent fungal cell wall formation by non-competitive inhibition of beta-1,3-glucan synthase. The 10,12-dimethylmyristoyl side chain is synthesized by the reducing polyketide synthase gloL/GLPKS4. The thioesterase gloN/GLHYD exclusively interacts with gloL/GLPKS4 to maintain turnover of the polyketide side chain. The 10R,12S-dimethylmyristic acid is then transferred to the first thiolation domain of the nonribosomal peptide synthetase gloA/GLNRPS4 by the acyl-AMP ligase gloD/GLligase, followed by its acylation to L-ornithine to trigger elongation of the cyclic hexapeptide. L-ornithine, 4R-hydroxyl-L-proline (generated from L-proline by the dioxygenase gloF/GLOXY2), 3S-hydroxyl-L-homotyrosine (generated by gloG/GLHtyB, gloH/GLHtyA, gloI/GLHtyC, gloJ/GLHtyD and hydroxylated at C-3 by the dioxygenase gloM/GLOXY1), 3R-hydroxyl-L-glutamine (generated from L-glutamine probably by the dioxygenase gloE/GLOXY3) and 3S-hydroxyl-L-proline (generated from L-proline by the dioxygenase gloF/GLOXY2 to yield pneumocandin B0), or 3S-hydroxyl-4S-methyl-L-proline (generated from L-leucine by the dioxygenase gloC/GLOXY4 to yield pneumocandin A0) are sequentially added to the growing chain. The last C domain of gloA/GLNRPS4 is proposed to be responsible for cyclization by condensation to form the peptide bond between L-ornithine and 3S-hydroxyl-4S-methyl-L-proline (for pneumocandin A0) or 3S-hydroxyl-L-proline (for pneumocandin B0). Finally, the subsequent C-4 hydroxylation of 3S-hydroxyl-L-homotyrosine and L-ornithine dihydroxylation at C-4 and C-5 are performed by the cytochrome P450 monooxygenases gloP/GLP450-1 and gloO/GLP450-2, respectively. This is 3-isopropylmalate dehydratase large subunit gloJ from Glarea lozoyensis (strain ATCC 20868 / MF5171).